The sequence spans 162 residues: Phosphopantetheine adenylyltransferase (162 aa).

Ser-9 is a substrate binding site. ATP contacts are provided by residues 9–10 and His-17; that span reads SF. The substrate site is built by Lys-41, Leu-73, and Lys-87. Residues 88 to 90, Glu-98, and 122 to 128 each bind ATP; these read GLR and YSFLSSS.

Belongs to the bacterial CoaD family. Homohexamer. Mg(2+) serves as cofactor.

It localises to the cytoplasm. It carries out the reaction (R)-4'-phosphopantetheine + ATP + H(+) = 3'-dephospho-CoA + diphosphate. It functions in the pathway cofactor biosynthesis; coenzyme A biosynthesis; CoA from (R)-pantothenate: step 4/5. Functionally, reversibly transfers an adenylyl group from ATP to 4'-phosphopantetheine, yielding dephospho-CoA (dPCoA) and pyrophosphate. The polypeptide is Phosphopantetheine adenylyltransferase (Salinispora tropica (strain ATCC BAA-916 / DSM 44818 / JCM 13857 / NBRC 105044 / CNB-440)).